The primary structure comprises 534 residues: MANVDLTKYGITGTTEIVHNPSYETLFEEETKAGLEGYEVGKETELGAVNVMTGIYTGRSPKDKYIVMDENSKDTVWWNTPEYPNDNHPMKEDVWATVKDLAKKELCNKKLFVVDAFCGANKDTRMAVRFIVEVAWQAHFVTNMFIQPSAEELENFEPDFVVYNASKAKVENYKELGLNSETCVAFNITSKEQVIINTWYGGEMKKGMFSMMNYYLPLKGIASMHCSANADMNGENTAIFFGLSGTGKTTLSTDPKRLLIGDDEHGWDDNGVFNFEGGCYAKVIGLDKESEPDIYNAIRRDALLENVTVADDGKIDFEDKSVTENTRVSYPINHITNIVKPVSSAPAAKNVIFLSADAFGVLPPVSILTPEQTQYYFLSGFTAKLAGTERGITEPTPTFSACFGQAFLELHPTKYAAELVKKMEKSGAKAYLVNTGWNGTGKRITIKDTRGIIDAILSGDILNAPTKKIPMFDFEVPTELPGVDSGILDPRDTYADASEWEAKAKDLAERFNKNFVKYTTNEAGKALVAAGPQL.

Residues Arg59, Tyr200, and Lys206 each coordinate substrate. ATP contacts are provided by residues Lys206, His225, and 242–250; that span reads GLSGTGKTT. Mn(2+)-binding residues include Lys206 and His225. A Mn(2+)-binding site is contributed by Asp263. Residues Glu291, Arg327, 443–444, and Thr449 each bind ATP; that span reads RI. Arg327 is a binding site for substrate.

Belongs to the phosphoenolpyruvate carboxykinase (ATP) family. Mn(2+) serves as cofactor.

It localises to the cytoplasm. The catalysed reaction is oxaloacetate + ATP = phosphoenolpyruvate + ADP + CO2. Its pathway is carbohydrate biosynthesis; gluconeogenesis. Its function is as follows. Involved in the gluconeogenesis. Catalyzes the conversion of oxaloacetate (OAA) to phosphoenolpyruvate (PEP) through direct phosphoryl transfer between the nucleoside triphosphate and OAA. The chain is Phosphoenolpyruvate carboxykinase (ATP) from Agathobacter rectalis (strain ATCC 33656 / DSM 3377 / JCM 17463 / KCTC 5835 / VPI 0990) (Eubacterium rectale).